Reading from the N-terminus, the 496-residue chain is Hexokinase-2 (496 aa).

Residues 4-24 form a helical membrane-spanning segment; the sequence is ATVGAVVVGTAAAVAVAALIM. In terms of domain architecture, Hexokinase spans 35-487; it reads ARARAILKEF…SGIGAALLAA (453 aa). The interval 90-228 is hexokinase small subdomain; that stretch reads TGDEGGVFYA…EIDMRVSALV (139 aa). ADP contacts are provided by G104, T105, and N106. Residues T194, K195, N229, and D230 each contribute to the D-glucose site. Residues 229 to 476 are hexokinase large subdomain; that stretch reads NDTVGTLAGG…TSIVFKHAND (248 aa). T253 serves as a coordination point for ADP. The D-glucose site is built by N256, E284, and E315. Position 441 (G441) interacts with ADP.

This sequence belongs to the hexokinase family.

The protein localises to the plastid. It is found in the chloroplast outer membrane. It carries out the reaction a D-hexose + ATP = a D-hexose 6-phosphate + ADP + H(+). It catalyses the reaction D-fructose + ATP = D-fructose 6-phosphate + ADP + H(+). The enzyme catalyses D-glucose + ATP = D-glucose 6-phosphate + ADP + H(+). The protein operates within carbohydrate metabolism; hexose metabolism. Its pathway is carbohydrate degradation; glycolysis; D-glyceraldehyde 3-phosphate and glycerone phosphate from D-glucose: step 1/4. Fructose and glucose phosphorylating enzyme. May be involved in the phosphorylation of glucose during the export from plastids to cytosol. Seems neither to be involved in cell sugar sensing nor in carbohydrate metabolism in tuber. The chain is Hexokinase-2 (HXK2) from Solanum tuberosum (Potato).